A 690-amino-acid chain; its full sequence is Eukaryotic translation initiation factor 3 subunit B (690 aa).

The segment covering Met1–Gly11 has biased composition (basic and acidic residues). The segment at Met1 to Asp33 is disordered. Residues Asn15–Phe25 are compositionally biased toward acidic residues. An RRM domain is found at Ser57–Asp141. WD repeat units lie at residues Thr207–Lys246, Gly292–Leu331, Ile334–Lys369, Glu442–Leu484, and Pro530–Thr575. Residues Glu613–Ile646 are a coiled coil.

This sequence belongs to the eIF-3 subunit B family. In terms of assembly, component of the eukaryotic translation initiation factor 3 (eIF-3) complex. The eIF-3 complex interacts with pix. Interacts with mxt.

The protein localises to the cytoplasm. RNA-binding component of the eukaryotic translation initiation factor 3 (eIF-3) complex, which is involved in protein synthesis of a specialized repertoire of mRNAs and, together with other initiation factors, stimulates binding of mRNA and methionyl-tRNAi to the 40S ribosome. The eIF-3 complex specifically targets and initiates translation of a subset of mRNAs involved in cell proliferation. In Drosophila grimshawi (Hawaiian fruit fly), this protein is Eukaryotic translation initiation factor 3 subunit B.